The chain runs to 148 residues: Hemoglobin subunit beta-2 (148 aa).

The Globin domain maps to 3–148 (EWTDAERTAI…VVSALCRQYH (146 aa)). The heme b site is built by histidine 64 and histidine 93.

In terms of assembly, heterotetramer of two alpha chains and two beta chains. In terms of tissue distribution, red blood cells.

Functionally, involved in oxygen transport from gills to the various peripheral tissues. The sequence is that of Hemoglobin subunit beta-2 (ba2) from Danio rerio (Zebrafish).